Here is a 2280-residue protein sequence, read N- to C-terminus: Protein Ycf2 (2280 aa).

Residue 1631–1638 participates in ATP binding; the sequence is GSIGTGRS.

The protein belongs to the Ycf2 family.

The protein resides in the plastid. It localises to the chloroplast stroma. Functionally, probable ATPase of unknown function. Its presence in a non-photosynthetic plant (Epifagus virginiana) and experiments in tobacco indicate that it has an essential function which is probably not related to photosynthesis. In Nicotiana tomentosiformis (Tobacco), this protein is Protein Ycf2.